Reading from the N-terminus, the 1010-residue chain is Protein CROWDED NUCLEI 4 (1010 aa).

Coiled-coil stretches lie at residues 82–350 (LLLL…LIQN) and 404–763 (EKEH…NLER). Short sequence motifs (nuclear localization signal) lie at residues 445-452 (NRKTTMLE) and 679-686 (LKRLDAER). Disordered stretches follow at residues 787–813 (GVST…PSSA), 839–937 (HYEE…TQTP), and 966–994 (DCSE…GINA). A compositionally biased stretch (basic and acidic residues) spans 849–863 (EKLKLESSRREEKAY). 2 stretches are compositionally biased toward polar residues: residues 883 to 893 (NTSGDETSEPS) and 912 to 921 (TQSVISSPQN).

This sequence belongs to the CRWN family. In terms of assembly, core component of the LINC complex which is composed of inner nuclear membrane SUN domain-containing proteins coupled to outer nuclear membrane WIP proteins, the nucleoskeletal CRWN/LINC proteins, and, possibly, KAKU4. Binds to KAKU4. In terms of tissue distribution, expressed at low levels in roots, leaves, flowers and flower stalks.

It is found in the nucleus membrane. It localises to the nucleus. The protein resides in the nucleoplasm. The protein localises to the nucleus lamina. Its subcellular location is the cytoplasm. Functionally, component of SUN-protein-containing multivariate complexes also called LINC complexes which link the nucleoskeleton and cytoskeleton by providing versatile outer nuclear membrane attachment sites for cytoskeletal filaments. Required for nucleus structure organization (e.g. size and shape). Involved in the maintenance of interphase chromocenter integrity and organization. The protein is Protein CROWDED NUCLEI 4 of Arabidopsis thaliana (Mouse-ear cress).